The primary structure comprises 623 residues: Xaa-Pro aminopeptidase 1 (623 aa).

Residue arginine 77 coordinates a peptide. Lysine 304 carries the post-translational modification N6-acetyllysine. Histidine 395 serves as a coordination point for a peptide. Residues aspartate 415, aspartate 426, and histidine 489 each contribute to the Mn(2+) site. Histidine 489, histidine 498, and glutamate 523 together coordinate a peptide. Mn(2+) contacts are provided by glutamate 523 and glutamate 537.

It belongs to the peptidase M24B family. In terms of assembly, homodimer. Requires Mn(2+) as cofactor.

It is found in the cytoplasm. The protein localises to the cytosol. The catalysed reaction is Release of any N-terminal amino acid, including proline, that is linked to proline, even from a dipeptide or tripeptide.. In terms of biological role, metalloaminopeptidase that catalyzes the removal of a penultimate prolyl residue from the N-termini of peptides, such as Arg-Pro-Pro. Contributes to the degradation of bradykinin. The polypeptide is Xaa-Pro aminopeptidase 1 (Mus musculus (Mouse)).